The primary structure comprises 426 residues: Chaperone SurA (426 aa).

Residues 1 to 13 form the signal peptide; sequence MLGALFLGTAANA. PpiC domains lie at 164 to 265 and 274 to 373; these read SEEL…KLLE and RDEV…EVLG.

The protein localises to the periplasm. It carries out the reaction [protein]-peptidylproline (omega=180) = [protein]-peptidylproline (omega=0). In terms of biological role, chaperone involved in the correct folding and assembly of outer membrane proteins. Recognizes specific patterns of aromatic residues and the orientation of their side chains, which are found more frequently in integral outer membrane proteins. May act in both early periplasmic and late outer membrane-associated steps of protein maturation. The chain is Chaperone SurA from Pseudomonas fluorescens (strain Pf0-1).